The chain runs to 274 residues: MQFSKMHGLGNDFMVVDAVTQNVFFSPDMIRRLADRHQGVGFDQLLVVEPPYDPDLDFHYRIFNADGSEVAQCGNGARCFARFVRLKGLTNKREIRVSTANGRMVLTVNEDEQVRVNMGEPVFEPSLVPFRANKAEKTYIMRAAEQTVLCGVVSMGNPHCVIQVDDVATAPVETLGPLMESHERFPERANIGFMQVMNTEHIRLRVFERGAGETQACGSGACGAVAVGIQQGLLAAQVRVDLPGGRLDIAWKGPGNPLFMTGPATHVYDGFIHL.

Asn11, Gln44, and Asn64 together coordinate substrate. The Proton donor role is filled by Cys73. Substrate is bound by residues 74-75, Asn157, Asn190, and 208-209; these read GN and ER. The active-site Proton acceptor is the Cys217. Position 218 to 219 (218 to 219) interacts with substrate; that stretch reads GS.

This sequence belongs to the diaminopimelate epimerase family. As to quaternary structure, homodimer.

The protein resides in the cytoplasm. It carries out the reaction (2S,6S)-2,6-diaminopimelate = meso-2,6-diaminopimelate. The protein operates within amino-acid biosynthesis; L-lysine biosynthesis via DAP pathway; DL-2,6-diaminopimelate from LL-2,6-diaminopimelate: step 1/1. Its function is as follows. Catalyzes the stereoinversion of LL-2,6-diaminopimelate (L,L-DAP) to meso-diaminopimelate (meso-DAP), a precursor of L-lysine and an essential component of the bacterial peptidoglycan. This is Diaminopimelate epimerase from Cronobacter sakazakii (strain ATCC BAA-894) (Enterobacter sakazakii).